The following is a 415-amino-acid chain: Phakinin (415 aa).

The interval 1 to 26 (MSTRRVVVDAPAGASSSMPLQRHKAS) is disordered. N-acetylserine is present on Ser2. The tract at residues 2-114 (STRRVVVDAP…LGAVEDLGGC (113 aa)) is head. Phosphoserine is present on residues Ser26, Ser32, and Ser35. A Phosphothreonine modification is found at Thr53. 2 positions are modified to phosphoserine: Ser90 and Ser100. The region spanning 104–415 (DLGAVEDLGG…HALLDREESS (312 aa)) is the IF rod domain. Coiled-coil stretches lie at residues 115-144 (LVEY…ESKA), 199-248 (RKAA…VKML), and 295-395 (QAKQ…LSHK). The segment at 396–415 (CQLQRDVASYHALLDREESS) is tail.

The protein belongs to the intermediate filament family. In terms of assembly, part of a complex required for lens intermediate filament formation composed of BFSP1, BFSP2 and CRYAA. Found in a complex composed of PPL (via C-terminal linker domain), BFSP1 and BFSP2 in the retinal lens. Within the complex interacts with PPL (via C-terminal linker domain) and with BFSP1. Identified in a complex that contains VIM, EZR, AHNAK, BFSP1, BFSP2, ANK2, PLEC, PRX and spectrin. Interacts with LGSN. Interacts with VIM. As to expression, abundantly expressed in both the inner and outer cortex of the retina, expressed at a lower level in the nucleus of the retina (at protein level). Detected in eye lens fiber cells (at protein level).

The protein localises to the cell membrane. It is found in the cytoplasm. It localises to the cytoskeleton. The protein resides in the cell cortex. Its function is as follows. Required for the correct formation of lens intermediate filaments as part of a complex composed of BFSP1, BFSP2 and CRYAA. Plays a role in maintenance of retinal lens optical clarity. The polypeptide is Phakinin (BFSP2) (Bos taurus (Bovine)).